The primary structure comprises 676 residues: DNA ligase (676 aa).

Residues 34–38 (DQEFD), 83–84 (SL), and Glu117 each bind NAD(+). Lys119 functions as the N6-AMP-lysine intermediate in the catalytic mechanism. 4 residues coordinate NAD(+): Arg140, Glu177, Lys285, and Lys309. Cys403, Cys406, Cys427, and Cys434 together coordinate Zn(2+). Residues 595–676 (NNNGLLKNKT…EWLKMLNKSG (82 aa)) form the BRCT domain.

This sequence belongs to the NAD-dependent DNA ligase family. LigA subfamily. The cofactor is Mg(2+). Mn(2+) is required as a cofactor.

The enzyme catalyses NAD(+) + (deoxyribonucleotide)n-3'-hydroxyl + 5'-phospho-(deoxyribonucleotide)m = (deoxyribonucleotide)n+m + AMP + beta-nicotinamide D-nucleotide.. DNA ligase that catalyzes the formation of phosphodiester linkages between 5'-phosphoryl and 3'-hydroxyl groups in double-stranded DNA using NAD as a coenzyme and as the energy source for the reaction. It is essential for DNA replication and repair of damaged DNA. The chain is DNA ligase from Pelagibacter ubique (strain HTCC1062).